Reading from the N-terminus, the 77-residue chain is NAD(P)H-quinone oxidoreductase subunit L (77 aa).

The next 2 membrane-spanning stretches (helical) occupy residues 12 to 32 (LIAYMGVITIYLLVIPLLLFY) and 47 to 67 (LGIYGLVFLFFPGLILFSPFL).

It belongs to the complex I NdhL subunit family. NDH-1 can be composed of about 15 different subunits; different subcomplexes with different compositions have been identified which probably have different functions.

The protein localises to the cellular thylakoid membrane. The catalysed reaction is a plastoquinone + NADH + (n+1) H(+)(in) = a plastoquinol + NAD(+) + n H(+)(out). It carries out the reaction a plastoquinone + NADPH + (n+1) H(+)(in) = a plastoquinol + NADP(+) + n H(+)(out). In terms of biological role, NDH-1 shuttles electrons from an unknown electron donor, via FMN and iron-sulfur (Fe-S) centers, to quinones in the respiratory and/or the photosynthetic chain. The immediate electron acceptor for the enzyme in this species is believed to be plastoquinone. Couples the redox reaction to proton translocation, and thus conserves the redox energy in a proton gradient. Cyanobacterial NDH-1 also plays a role in inorganic carbon-concentration. The chain is NAD(P)H-quinone oxidoreductase subunit L from Prochlorococcus marinus (strain MIT 9312).